A 346-amino-acid polypeptide reads, in one-letter code: Methylthioribose-1-phosphate isomerase (346 aa).

Substrate is bound by residues 45–47 (RGA), Arg87, and Gln194. Asp235 serves as the catalytic Proton donor. 245–246 (NK) provides a ligand contact to substrate.

Belongs to the eIF-2B alpha/beta/delta subunits family. MtnA subfamily.

It carries out the reaction 5-(methylsulfanyl)-alpha-D-ribose 1-phosphate = 5-(methylsulfanyl)-D-ribulose 1-phosphate. Its pathway is amino-acid biosynthesis; L-methionine biosynthesis via salvage pathway; L-methionine from S-methyl-5-thio-alpha-D-ribose 1-phosphate: step 1/6. Its function is as follows. Catalyzes the interconversion of methylthioribose-1-phosphate (MTR-1-P) into methylthioribulose-1-phosphate (MTRu-1-P). The sequence is that of Methylthioribose-1-phosphate isomerase from Syntrophomonas wolfei subsp. wolfei (strain DSM 2245B / Goettingen).